We begin with the raw amino-acid sequence, 617 residues long: Zinc finger protein 613 (617 aa).

The 71-residue stretch at 8–78 folds into the KRAB domain; that stretch reads LTLEDVAVEF…ENEIHSQICP (71 aa). C2H2-type zinc fingers lie at residues 204 to 226, 232 to 254, 260 to 282, 288 to 310, 316 to 338, 344 to 366, 372 to 394, 400 to 422, 428 to 450, 456 to 478, 484 to 506, and 512 to 535; these read HVCTECGKAFLKKSRLIYHQRVH, HGCSICGKAFSRKSGLTEHQRNH, YECTECDKAFRWKSQLNAHQKIH, YICSDCGKGFIKKSRLINHQRVH, HGCSLCGKAFSKRSRLTEHQRTH, YECTECDKAFRWKSQLNAHQKAH, YICRDCGKGFIQKGNLIVHQRIH, YICNECGKGFIQKGNLLIHRRTH, YVCNECGKGFSQKTCLISHQRFH, FVCTECGKSCSHKSGLINHQRIH, YTCSDCGKAFRDKSCLNRHRRTH, and YGCSDCGKAFSHLSCLVYHKGMLH.

Belongs to the krueppel C2H2-type zinc-finger protein family.

It localises to the nucleus. May be involved in transcriptional regulation. This chain is Zinc finger protein 613 (ZNF613), found in Homo sapiens (Human).